The chain runs to 217 residues: Cytidylate kinase (217 aa).

9-17 (GPAASGKSS) contacts ATP.

The protein belongs to the cytidylate kinase family. Type 1 subfamily.

Its subcellular location is the cytoplasm. It catalyses the reaction CMP + ATP = CDP + ADP. It carries out the reaction dCMP + ATP = dCDP + ADP. In Bdellovibrio bacteriovorus (strain ATCC 15356 / DSM 50701 / NCIMB 9529 / HD100), this protein is Cytidylate kinase.